Consider the following 508-residue polypeptide: Phytepsin (508 aa).

Positions 1–27 (MGTRGLALALLAAVLLLQTVLPAASEA) are cleaved as a signal peptide. Positions 28 to 66 (EGLVRIALKKRPIDRNSRVATGLSGGEEQPLLSGANPLR) are cleaved as a propeptide — activation peptide. Residues 84–505 (YFGEIGVGTP…DYGKLRIGFA (422 aa)) enclose the Peptidase A1 domain. Aspartate 102 is a catalytic residue. 2 disulfide bridges follow: cysteine 115–cysteine 121 and cysteine 280–cysteine 284. Aspartate 289 is a catalytic residue. The 106-residue stretch at 314–419 (VVSQECKTIV…NQLCNRLPSP (106 aa)) folds into the Saposin B-type domain. 4 disulfide bridges follow: cysteine 319/cysteine 413, cysteine 344/cysteine 385, cysteine 350/cysteine 382, and cysteine 427/cysteine 464. Residue asparagine 399 is glycosylated (N-linked (GlcNAc...) asparagine).

It belongs to the peptidase A1 family. In terms of assembly, heterodimer of two subunits (29 kDa and 11 kDa) processed from the precursor molecule. A large enzyme (32 kDa and 16 kDa) is an intermediate precursor form. Embryo and leaf.

Its subcellular location is the vacuole. It carries out the reaction Prefers hydrophobic residues Phe, Val, Ile, Leu, and Ala at P1 and P1', but also cleaves -Phe-|-Asp- and -Asp-|-Asp- bonds in 2S albumin from plant seeds.. Involved in the breakdown of propeptides of storage proteins in protein-storage vacuoles. The protein is Phytepsin of Hordeum vulgare (Barley).